A 718-amino-acid chain; its full sequence is ADP-ribosylation factor-binding protein GGA3 (718 aa).

A VHS domain is found at 16–146 (ATNPSNRQED…MLKRQGIVQS (131 aa)). Phosphoserine is present on residues serine 159 and serine 275. A GAT domain is found at 171–298 (DEEKSKLLAR…VINSYKTIIE (128 aa)). Positions 299 to 588 (GQIVNGEVTT…VHVPLESIKP (290 aa)) are unstructured hinge. 2 stretches are compositionally biased toward low complexity: residues 334–350 (APSN…SGIP) and 360–369 (GPPRSRSSSQ). The segment at 334–381 (APSNSSPALAPPTSGIPILPPPPQTSGPPRSRSSSQAEAPPGSDSTNN) is disordered. Residues 387-391 (DEELL) carry the Autoinhibitory motif. Disordered stretches follow at residues 395 to 455 (LTDP…MSQA) and 477 to 506 (SFMF…STSH). In terms of domain architecture, GAE spans 589-710 (SSALPVTAYD…TELGEVDQFP (122 aa)).

The protein belongs to the GGA protein family. Monomer. Interacts with GGA1 and GGA2. Binds to clathrin and activated ARFs, such as ARF1, ARF5 and ARF6. Binds RABEP1 and RABGEF1. Interacts with the membrane proteins M6PR/CD-MPR and IGF2R/CI-MPR and the accessory proteins SYNRG, EPN4, NECAP1, NECAP2 and AFTPH/aftiphilin. Interacts with TSG101 and UBC. Interacts with ADRA2B. Interacts with NTRK1; the interaction is independent of NTRK1 activation and ubiquitination. Interacts (via VHS domain) with BACE1 (via DXXLL motif). In terms of processing, phosphorylated by CK2 and dephosphorylated by PP2A. Phosphorylation of GGA3 allows the internal DXXLL motif to bind the VHS domain and to inhibit the recognition of cargo signals. Ubiquitinated. Post-translationally, proteolytically cleaved during apoptosis by CASP3.

It is found in the golgi apparatus. Its subcellular location is the trans-Golgi network membrane. The protein resides in the endosome membrane. The protein localises to the early endosome membrane. It localises to the recycling endosome membrane. Plays a role in protein sorting and trafficking between the trans-Golgi network (TGN) and endosomes. Mediates the ARF-dependent recruitment of clathrin to the TGN and binds ubiquitinated proteins and membrane cargo molecules with a cytosolic acidic cluster-dileucine (DXXLL) motif. Functionally, plays a role in protein sorting and trafficking between the trans-Golgi network (TGN) and endosomes. Mediates the ARF-dependent recruitment of clathrin to the TGN and binds ubiquitinated proteins and membrane cargo molecules with a cytosolic acidic cluster-dileucine (DXXLL) motif. Mediates export of the GPCR receptor ADRA2B to the cell surface. Involved in BACE1 transport and sorting as well as regulation of BACE1 protein levels. Regulates retrograde transport of BACE1 from endosomes to the trans-Golgi network via interaction through the VHS motif and dependent of BACE1 phosphorylation. Modulates BACE1 protein levels independently of the interaction between VHS domain and DXXLL motif through recognition of ubiquitination. Key player in a novel DXXLL-mediated endosomal sorting machinery to the recycling pathway that targets NTRK1 to the plasma membrane. This is ADP-ribosylation factor-binding protein GGA3 (Gga3) from Mus musculus (Mouse).